We begin with the raw amino-acid sequence, 534 residues long: tRNA pseudouridine synthase 1 (534 aa).

The interval 1-32 is disordered; that stretch reads MGRGGKRTWYNGDRREAKRNRPNSIYNGEGRP. The active-site Nucleophile is aspartate 103. Disordered regions lie at residues 246–271 and 507–534; these read LANS…DSDS and QEVS…DLEG. 3 positions are modified to phosphoserine: serine 518, serine 519, and serine 525.

The protein belongs to the tRNA pseudouridine synthase TruA family. Zn(2+) serves as cofactor.

It is found in the nucleus. It catalyses the reaction a uridine in tRNA = a pseudouridine in tRNA. The enzyme catalyses uridine in snRNA = pseudouridine in snRNA. It carries out the reaction a uridine in mRNA = a pseudouridine in mRNA. Formation of pseudouridine at positions 27 and 28 in the anticodon stem and loop of transfer RNAs; at positions 34 and 36 of intron-containing precursor tRNA(Ile) and at position 35 in the intron-containing tRNA(Tyr). Catalyzes pseudouridylation at position 44 in U2 snRNA. Also catalyzes pseudouridylation of mRNAs. The polypeptide is tRNA pseudouridine synthase 1 (pus1) (Schizosaccharomyces pombe (strain 972 / ATCC 24843) (Fission yeast)).